A 167-amino-acid chain; its full sequence is Ubiquitin-conjugating enzyme E2 15 (167 aa).

In terms of domain architecture, UBC core spans 5–165; it reads ASEQLLRKQL…VRRLVRRSIE (161 aa). C90 functions as the Glycyl thioester intermediate in the catalytic mechanism.

It belongs to the ubiquitin-conjugating enzyme family.

The enzyme catalyses S-ubiquitinyl-[E1 ubiquitin-activating enzyme]-L-cysteine + [E2 ubiquitin-conjugating enzyme]-L-cysteine = [E1 ubiquitin-activating enzyme]-L-cysteine + S-ubiquitinyl-[E2 ubiquitin-conjugating enzyme]-L-cysteine.. It functions in the pathway protein modification; protein ubiquitination. Functionally, catalyzes the covalent attachment of ubiquitin to other proteins. Has a role in the formation of chromatin structures that influence the localization of transcriptional silencing factors. The protein is Ubiquitin-conjugating enzyme E2 15 (ubc15) of Schizosaccharomyces pombe (strain 972 / ATCC 24843) (Fission yeast).